We begin with the raw amino-acid sequence, 673 residues long: F-box/LRR-repeat protein 17 (673 aa).

Positions 1 to 39 are disordered; sequence MGHVAPHASKKEHVAPHAAEKDHVAPHASKKEHVAPHAA. A compositionally biased stretch (basic and acidic residues) spans 9–39; that stretch reads SKKEHVAPHAAEKDHVAPHASKKEHVAPHAA. One can recognise an F-box domain in the interval 291-338; sequence PLHINQLPSSLLLKIFSNLSLNERCILASLVCKYWRDLCLDSQFWKQL.

This sequence belongs to the FBXL17 family. In terms of assembly, part of the SCF (SKP1-CUL1-F-box) E3 ubiquitin-protein ligase complex SCF(FBXL17). Interacts with BTB domain-containing proteins; specifically recognizes and binds a conserved degron of non-consecutive residues present at the interface of BTB dimers of aberrant composition. In terms of tissue distribution, expressed in the neuro-ectoderm of embryos.

It is found in the cytoplasm. The protein resides in the nucleus. Functionally, substrate-recognition component of the SCF(FBXL17) E3 ubiquitin ligase complex, a key component of a quality control pathway required to ensure functional dimerization of BTB domain-containing proteins (dimerization quality control, DQC). FBXL17 specifically recognizes and binds a conserved degron of non-consecutive residues present at the interface of BTB dimers of aberrant composition: aberrant BTB dimer are then ubiquitinated by the SCF(FBXL17) complex and degraded by the proteasome. The ability of the SCF(FBXL17) complex to eliminate compromised BTB dimers is required for the differentiation and survival of neural crest and neuronal cells. This is F-box/LRR-repeat protein 17 from Xenopus laevis (African clawed frog).